Reading from the N-terminus, the 87-residue chain is HssA/B-like protein 55 (87 aa).

The segment covering 1–13 (MTILSAITSISRP) has biased composition (polar residues). The disordered stretch occupies residues 1–31 (MTILSAITSISRPNKSSKSVVSSNGGSSLSM). Low complexity predominate over residues 14–31 (NKSSKSVVSSNGGSSLSM).

The protein belongs to the hssA/B family.

This chain is HssA/B-like protein 55 (hssl55), found in Dictyostelium discoideum (Social amoeba).